Consider the following 140-residue polypeptide: Large ribosomal subunit protein bL21 (140 aa).

The disordered stretch occupies residues 106–140 (SGVKPAVGARTKIEPAVKPAKAKKSEAEASAEDAN).

Belongs to the bacterial ribosomal protein bL21 family. Part of the 50S ribosomal subunit. Contacts protein L20.

In terms of biological role, this protein binds to 23S rRNA in the presence of protein L20. The protein is Large ribosomal subunit protein bL21 of Paracoccus denitrificans (strain Pd 1222).